A 1564-amino-acid polypeptide reads, in one-letter code: ATP-dependent permease PDR10 (1564 aa).

Positions 1–16 (MLQAPSSSNSGLNQGN) are enriched in polar residues. The disordered stretch occupies residues 1-37 (MLQAPSSSNSGLNQGNAAPDGPPNETQPYEGLDAAAQ). Residues 1–587 (MLQAPSSSNS…AAIFFAILFN (587 aa)) lie on the Cytoplasmic side of the membrane. The region spanning 174 to 430 (ISRRLFHRTH…FQRMGYVCPE (257 aa)) is the ABC transporter 1 domain. Transmembrane regions (helical) follow at residues 588–608 (AFSS…TEKH), 624–644 (TFSD…PYYF), 674–694 (RCIG…SVLL), 699–719 (MYTG…WISY), and 732–752 (INEF…GPNY). The N-linked (GlcNAc...) asparagine glycan is linked to asparagine 754. Over residues 839-849 (KGIVSEKKKKN) the composition is skewed to basic residues. Residues 839–872 (KGIVSEKKKKNQPTLSTSDAEKDVEMNNNSSATD) are disordered. The chain crosses the membrane as a helical span at residues 841–861 (IVSEKKKKNQPTLSTSDAEKD). At 862-1304 (VEMNNNSSAT…IFMFTVVFNP (443 aa)) the chain is on the cytoplasmic side. An ABC transporter 2 domain is found at 923 to 1166 (FHWKNLCYDI…MINYFEAHGA (244 aa)). 959–966 (GASGAGKT) serves as a coordination point for ATP. 6 helical membrane passes run 1305–1325 (ILQQ…ARER), 1340–1360 (ILVE…VYYY), 1390–1410 (VYIS…ENAA), 1426–1446 (VLAT…VSPL), 1459–1479 (ANAS…PSGM), and 1491–1511 (STGT…FCQF). The Cytoplasmic segment spans residues 1512 to 1564 (SSTNDYLATVSSSYSRRWMNYGIFSAYIVFDYCAAIFLYWLVRVPKKSKKLKK).

The protein belongs to the ABC transporter superfamily. ABCG family. PDR (TC 3.A.1.205) subfamily.

It is found in the membrane. The sequence is that of ATP-dependent permease PDR10 (PDR10) from Saccharomyces cerevisiae (strain ATCC 204508 / S288c) (Baker's yeast).